Reading from the N-terminus, the 793-residue chain is Protein smoothened (793 aa).

The first 30 residues, 1-30, serve as a signal peptide directing secretion; that stretch reads MAAGRPVRGPELAPRRLLQLLLLVLLGGRG. Residues 31 to 237 lie on the Extracellular side of the membrane; that stretch reads RGAALSGNVT…EAEHQDMHSY (207 aa). Residues 35 to 61 are disordered; sequence LSGNVTGPGPRSAGGSARRNAPVTSPP. Asn38 carries N-linked (GlcNAc...) asparagine glycosylation. Intrachain disulfides connect Cys68–Cys182, Cys74–Cys138, Cys82–Cys131, Cys122–Cys158, and Cys151–Cys173. Positions 69–185 constitute an FZ domain; it reads GRAAHCEPLR…DHFPEGCPNE (117 aa). Residue Asp99 coordinates cholesterol. An N-linked (GlcNAc...) asparagine glycan is attached at Asn192. Cystine bridges form between Cys197–Cys217, Cys221–Cys299, and Cys318–Cys394. Residues 238-258 form a helical membrane-spanning segment; the sequence is IAAFGAVTGLCTLFTLATFVA. Topologically, residues 259-266 are cytoplasmic; sequence DWRNSNRY. The chain crosses the membrane as a helical span at residues 267-287; that stretch reads PAVILFYVNACFFVGSIGWLA. The Extracellular segment spans residues 288–318; it reads QFMDGARREIVCRADGTMRFGEPTSSETLSC. Residues 319 to 339 traverse the membrane as a helical segment; it reads VIIFVIVYYALMAGVVWFVVL. Topologically, residues 340-362 are cytoplasmic; the sequence is TYAWHTSFKALGTTYQPLSGKTS. A helical transmembrane segment spans residues 363–383; it reads YFHLLTWSLPFVLTVAILAVA. Residues 384 to 406 are Extracellular-facing; the sequence is QVDGDSVSGICFVGYKNYRYRAG. A cholesterol-binding site is contributed by Tyr398. The chain crosses the membrane as a helical span at residues 407 to 427; the sequence is FVLAPIGLVLIVGGYFLIRGV. The Cytoplasmic portion of the chain corresponds to 428–455; the sequence is MTLFSIKSNHPGLLSEKAASKINETMLR. Residues 456-476 form a helical membrane-spanning segment; that stretch reads LGIFGFLAFGFVLITFSCHFY. At 477–528 the chain is on the extracellular side; sequence DFFNQAEWERSFRDYVLCQANVTIGLPTKKPIPDCEIKNRPSLLVEKINLFA. Cys494 and Cys511 are disulfide-bonded. Asn497 carries an N-linked (GlcNAc...) asparagine glycan. A helical transmembrane segment spans residues 529 to 549; it reads MFGTGIAMSTWVWTKATLLIW. Residues 542-573 form an interaction with BBS5 and BBS7 region; that stretch reads TKATLLIWRRTWCRLTGHSDDEPKRIKKSKMI. Over 550–793 the chain is Cytoplasmic; sequence RRTWCRLTGH…AELLDADSDF (244 aa). A phosphoserine mark is found at Ser560, Ser578, and Ser594. The required for interaction with PRKACA stretch occupies residues 574–657; it reads AKAFSKRREL…TPVPPEEQAN (84 aa). Residues 585 to 597 form an interaction with DLG5 region; the sequence is QNPGQELSFSMHT. At Thr597 the chain carries Phosphothreonine. Ser599 and Ser642 each carry phosphoserine. 2 positions are modified to phosphothreonine: Thr644 and Thr648. Residue Ser666 is modified to Phosphoserine. Residues 674–684 show a composition bias toward basic residues; it reads GRKKKRRKRKK. Residues 674–702 are disordered; the sequence is GRKKKRRKRKKEVCPLGPAPELHHSAPVP.

The protein belongs to the G-protein coupled receptor Fz/Smo family. Homodimer. Interacts (via C-terminus) with protein kinase A catalytic subunit PRKACA; interacts with free PRKACA subunits and the interaction leads to sequestration of PRKACA at the membrane, preventing PRKACA-mediated phosphorylation of GLI transcription factors. Interacts with ARRB2. Interacts with KIF7. Interacts with BBS5 and BBS7; the interactions are indicative for the association of SMO with the BBsome complex to facilitate ciliary localization of SMO. Interacts with DLG5 and SDCBP. Interacts with GAS8/DRC4. Post-translationally, phosphorylation by GRK kinases is required for interaction with protein kinase A catalytic subunit PRKACA. In terms of tissue distribution, in embryo, found in the early neural folds and neural tube, pre-somitic mesoderm and somites, developing limb bud, gut, eye, testes, cartilage, muscle, lung, epiglottis, thymus, tongue, jaw, taste buds, teeth, and skin. In adult, found in multiple tissues including heart, brain, liver, lung, skeletal muscle, kidney and testis.

It localises to the cell membrane. The protein localises to the cell projection. It is found in the cilium. G protein-coupled receptor which associates with the patched protein (PTCH) to transduce hedgehog protein signaling. Binding of sonic hedgehog (SHH) to its receptor patched prevents inhibition of smoothened (SMO) by patched. When active, SMO binds to and sequesters protein kinase A catalytic subunit PRKACA at the cell membrane, preventing PRKACA-mediated phosphorylation of GLI transcription factors which releases the GLI proteins from PRKACA-mediated inhibition and allows for transcriptional activation of hedgehog pathway target genes. Required for the accumulation of KIF7, GLI2 and GLI3 in the cilia. Interacts with DLG5 at the ciliary base to induce the accumulation of KIF7 and GLI2 at the ciliary tip for GLI2 activation. The polypeptide is Protein smoothened (Smo) (Rattus norvegicus (Rat)).